We begin with the raw amino-acid sequence, 27 residues long: Delta-conotoxin SuVIA (27 aa).

3 disulfide bridges follow: Cys1–Cys17, Cys8–Cys21, and Cys16–Cys25.

Belongs to the conotoxin O1 superfamily. Expressed by the venom duct, in the proximal part (indicative of a defensive role).

It localises to the secreted. In terms of biological role, this toxin activates voltage-gated sodium channels (Nav1.3/SCN3A (EC(50)=3.98 nM), Nav1.4/SCN4A (EC(50)=4.99 nM), Nav1.6/SCN8A (EC(50)=1.27 nM) and Nav1.7/SCN9A (EC(50)=2.42 nM)). It shifts the voltage-dependence of activation to more hyperpolarized potentials but has only little effect on channel inactivation. In vivo, it induces nocifensive or pain-like behaviors in mice when injected intraplantarly. This is coherent with the specific defensive role deduced from its proximal position in the venom gland. This chain is Delta-conotoxin SuVIA, found in Conus suturatus (Sutured cone).